A 267-amino-acid chain; its full sequence is Carboxy-S-adenosyl-L-methionine synthase (267 aa).

A compositionally biased stretch (polar residues) spans 1–11; that stretch reads MPNRDTQSQND. Residues 1-25 form a disordered region; that stretch reads MPNRDTQSQNDTPRHSPEAAEPQRD. Positions 12–24 are enriched in basic and acidic residues; the sequence is TPRHSPEAAEPQR. S-adenosyl-L-methionine-binding positions include Y59, 84-86, 109-110, 137-138, N152, and R219; these read GCS, DN, and DI.

The protein belongs to the class I-like SAM-binding methyltransferase superfamily. Cx-SAM synthase family. As to quaternary structure, homodimer.

It carries out the reaction prephenate + S-adenosyl-L-methionine = carboxy-S-adenosyl-L-methionine + 3-phenylpyruvate + H2O. Its function is as follows. Catalyzes the conversion of S-adenosyl-L-methionine (SAM) to carboxy-S-adenosyl-L-methionine (Cx-SAM). In Yersinia pseudotuberculosis serotype O:1b (strain IP 31758), this protein is Carboxy-S-adenosyl-L-methionine synthase.